The chain runs to 312 residues: Methionyl-tRNA formyltransferase (312 aa).

117–120 (SLLP) is a binding site for (6S)-5,6,7,8-tetrahydrofolate.

It belongs to the Fmt family.

The enzyme catalyses L-methionyl-tRNA(fMet) + (6R)-10-formyltetrahydrofolate = N-formyl-L-methionyl-tRNA(fMet) + (6S)-5,6,7,8-tetrahydrofolate + H(+). Its function is as follows. Attaches a formyl group to the free amino group of methionyl-tRNA(fMet). The formyl group appears to play a dual role in the initiator identity of N-formylmethionyl-tRNA by promoting its recognition by IF2 and preventing the misappropriation of this tRNA by the elongation apparatus. The protein is Methionyl-tRNA formyltransferase of Bordetella parapertussis (strain 12822 / ATCC BAA-587 / NCTC 13253).